Here is an 887-residue protein sequence, read N- to C-terminus: Alanine--tRNA ligase (887 aa).

Residues 425–441 (MQEQKSRARSDRREKQQ) show a composition bias toward basic and acidic residues. Residues 425-448 (MQEQKSRARSDRREKQQTGDGAGS) are disordered. Residues H569, H573, C672, and H676 each contribute to the Zn(2+) site.

The protein belongs to the class-II aminoacyl-tRNA synthetase family. Zn(2+) is required as a cofactor.

It is found in the cytoplasm. It catalyses the reaction tRNA(Ala) + L-alanine + ATP = L-alanyl-tRNA(Ala) + AMP + diphosphate. Functionally, catalyzes the attachment of alanine to tRNA(Ala) in a two-step reaction: alanine is first activated by ATP to form Ala-AMP and then transferred to the acceptor end of tRNA(Ala). Also edits incorrectly charged Ser-tRNA(Ala) and Gly-tRNA(Ala) via its editing domain. This is Alanine--tRNA ligase from Chlorobium luteolum (strain DSM 273 / BCRC 81028 / 2530) (Pelodictyon luteolum).